Reading from the N-terminus, the 192-residue chain is MGQIEWAMWANEQALASGLILITGGIVATAGRFTQWYFGAYSIVAGVLICLLEYPRGKRKKGSTMERCGQKYLTAVVKLFGPLTRNYYVRAVLHLLLSVPAGFLLATILGTVCLAIASVIYLLAAIRGEQWTPIEPKPKERPQVGGTIKQPPTNPPPRPPAEVRKKPSEAEEEAASAGGPQVNPIPVTDEVV.

At G2–A7 the chain is on the cytoplasmic side. The chain crosses the membrane as a helical span at residues M8–A30. Residues G31–Q35 are Extracellular-facing. Residues W36–E53 traverse the membrane as a helical segment. At Y54–G69 the chain is on the cytoplasmic side. An intramembrane segment occupies Q70–F80. The Cytoplasmic portion of the chain corresponds to G81–N86. The chain crosses the membrane as a helical span at residues Y87 to L104. A topological domain (extracellular) is located at residue L105. A helical membrane pass occupies residues A106–I126. At R127–V192 the chain is on the cytoplasmic side. The interval I134–V192 is disordered. T147 bears the Phosphothreonine mark. Residue K149 forms a Glycyl lysine isopeptide (Lys-Gly) (interchain with G-Cter in ubiquitin) linkage. S168 and S176 each carry phosphoserine.

Belongs to the p22phox family. In terms of assembly, component of the phagocyte NADPH oxidase core complex/cytochrome b558 complex, composed of CYBB (heavy chain (beta)) and CYBA (light chain (alpha)). Component of the phagocyte NADPH oxidase complex composed of an obligatory core heterodimer formed by the membrane proteins CYBA and CYBB and the cytosolic regulatory subunits NCF1/p47-phox, NCF2/p67-phox, NCF4/p40-phox and the small GTPase RAC1 or RAC2. Interacts with NCF1 (via SH3 domain). Interacts with SH3PXD2A. Interacts with DUOX1, DUOX2 and TPO. Interacts with NOX4; this interaction mediates superoxide generation. Interacts with calprotectin (S100A8/9). Interacts with GBP7. Interacts with NOXO1. Forms a heterodimer with NOX3 and is essential for activity and cell membrane localization of NOX3. Interacts with NOX1. Phosphorylation at Thr-147 enhances NADPH oxidase activity by promoting NCF1/p47-phox binding. Post-translationally, ubiquitinated at Lys-149 likely by RNF145. As to expression, expressed to a relatively high level in kidney, spleen, thymus and lung, and to a lower level in aorta, adrenals, and heart. Expression is not detected in liver or brain.

It is found in the cell membrane. In terms of biological role, subunit of NADPH oxidase complexes that is required for the NADPH oxidase activity that generates, in various cell types, superoxide from molecular oxygen utilizing NADPH as an electron donor. Subunit of the phagocyte NADPH oxidase complex that mediates the transfer of electrons from cytosolic NADPH to O2 to produce the superoxide anion (O2(-)). In the activated complex, electrons are first transferred from NADPH to flavin adenine dinucleotide (FAD) and subsequently transferred via two heme molecules to molecular oxygen, producing superoxide through an outer-sphere reaction. Activation of the NADPH oxidase complex is initiated by the assembly of cytosolic subunits of the NADPH oxidase complex with the core NADPH oxidase complex to form a complex at the plasma membrane or phagosomal membrane. This activation process is initiated by phosphorylation dependent binding of the cytosolic NCF1/p47-phox subunit to the C-terminus of CYBA/p22-phox. Aassociates with NOX3 to form a functional NADPH oxidase constitutively generating superoxide. This Rattus norvegicus (Rat) protein is Cytochrome b-245 light chain.